A 740-amino-acid polypeptide reads, in one-letter code: ATP-dependent DNA helicase Hel308 (740 aa).

Residues Q28 and 46 to 53 each bind ATP; that span reads IPTASGKT. Residues 33 to 204 form the Helicase ATP-binding domain; that stretch reads RQGLLDGKNL…WMDAALVQSE (172 aa). Positions 149 to 152 match the DEAH box motif; it reads DEVH. The 201-residue stretch at 236 to 436 folds into the Helicase C-terminal domain; the sequence is EVNSLVADTL…EPAMRAHALS (201 aa). Residues 716–740 are disordered; it reads VDHTPPETEEQPQVSGQSTLFSFDG. The span at 726 to 740 shows a compositional bias: polar residues; sequence QPQVSGQSTLFSFDG.

It belongs to the helicase family. Hel308 subfamily. In terms of assembly, monomer.

It catalyses the reaction Couples ATP hydrolysis with the unwinding of duplex DNA by translocating in the 3'-5' direction.. The catalysed reaction is ATP + H2O = ADP + phosphate + H(+). In terms of biological role, DNA-dependent ATPase and 3'-5' DNA helicase that may be involved in repair of stalled replication forks. This chain is ATP-dependent DNA helicase Hel308, found in Methanocella arvoryzae (strain DSM 22066 / NBRC 105507 / MRE50).